Here is a 153-residue protein sequence, read N- to C-terminus: Small ribosomal subunit protein uS5 (153 aa).

Residues 15-78 (FQEVVVNIGR…DDAFKNLIHV (64 aa)) form the S5 DRBM domain.

It belongs to the universal ribosomal protein uS5 family. Part of the 30S ribosomal subunit. Contacts proteins S4 and S8.

With S4 and S12 plays an important role in translational accuracy. In terms of biological role, located at the back of the 30S subunit body where it stabilizes the conformation of the head with respect to the body. The sequence is that of Small ribosomal subunit protein uS5 from Helicobacter pylori (strain P12).